A 392-amino-acid chain; its full sequence is Ribonuclease D (392 aa).

Positions 12–178 constitute a 3'-5' exonuclease domain; that stretch reads LIETTEALAA…PVYEGLRARL (167 aa). The HRDC domain maps to 217-298; sequence NRRQLALVKA…ASTKAIPDAE (82 aa).

Belongs to the RNase D family. The cofactor is a divalent metal cation.

Its subcellular location is the cytoplasm. It carries out the reaction Exonucleolytic cleavage that removes extra residues from the 3'-terminus of tRNA to produce 5'-mononucleotides.. Its function is as follows. Exonuclease involved in the 3' processing of various precursor tRNAs. Initiates hydrolysis at the 3'-terminus of an RNA molecule and releases 5'-mononucleotides. The chain is Ribonuclease D from Acidiphilium cryptum (strain JF-5).